The following is a 192-amino-acid chain: Peroxiredoxin tpx1 (192 aa).

Residues 3 to 161 (LQIGKPAPDF…ALRLLDAFQF (159 aa)) enclose the Thioredoxin domain. Cys48 acts as the Cysteine sulfenic acid (-SOH) intermediate in catalysis. Ser105 and Ser148 each carry phosphoserine.

Belongs to the peroxiredoxin family. AhpC/Prx1 subfamily. As to quaternary structure, homodimer; disulfide-linked, upon oxidation. Interacts with srx1 in response to oxidative stress. Interacts with pap1 via transient disulfide linkages. Post-translationally, the enzyme can be inactivated by further oxidation of the cysteine sulfenic acid (C(P)-SOH) to sulphinic acid (C(P)-SO2H) instead of its condensation to a disulfide bond. It can be reactivated by forming a transient disulfide bond with sulfiredoxin srx1, which reduces the cysteine sulfinic acid in an ATP- and Mg-dependent manner.

It is found in the cytoplasm. The protein localises to the nucleus. The catalysed reaction is a hydroperoxide + [thioredoxin]-dithiol = an alcohol + [thioredoxin]-disulfide + H2O. Functionally, thiol-specific peroxidase that catalyzes the reduction of hydrogen peroxide and organic hydroperoxides to water and alcohols, respectively. Plays a role in cell protection against oxidative stress by detoxifying peroxides and as sensor of hydrogen peroxide-mediated signaling events. Relays hydrogen peroxide as a signal to the transcription factor pap1 by inducing the formation of intramolecular disulfide bonds in pap1, which causes its nuclear accumulation and activation. Reduced by srx1 and this regulation acts as a molecular switch controlling the transcriptional response to hydrogen peroxide. The sequence is that of Peroxiredoxin tpx1 (tpx1) from Schizosaccharomyces pombe (strain 972 / ATCC 24843) (Fission yeast).